The primary structure comprises 181 residues: ATP-dependent protease subunit HslV (181 aa).

Residue Thr7 is part of the active site. Residues Ala166, Cys169, and Thr172 each coordinate Na(+).

Belongs to the peptidase T1B family. HslV subfamily. In terms of assembly, a double ring-shaped homohexamer of HslV is capped on each side by a ring-shaped HslU homohexamer. The assembly of the HslU/HslV complex is dependent on binding of ATP.

The protein resides in the cytoplasm. The catalysed reaction is ATP-dependent cleavage of peptide bonds with broad specificity.. With respect to regulation, allosterically activated by HslU binding. Protease subunit of a proteasome-like degradation complex believed to be a general protein degrading machinery. This Anaeromyxobacter dehalogenans (strain 2CP-C) protein is ATP-dependent protease subunit HslV.